The following is a 134-amino-acid chain: Thionin-2.2 (134 aa).

Positions 1–24 are cleaved as a signal peptide; that stretch reads MEGKTVISSLLIMSLVLAQIQVEA. Disulfide bonds link cysteine 27–cysteine 64, cysteine 28–cysteine 56, and cysteine 40–cysteine 50. A propeptide spans 71–134 (acidic domain); it reads DILENSGDAV…GGSTAAVKSA (64 aa).

It belongs to the plant thionin (TC 1.C.44) family. Low basal expression in seedlings. Also detected in rosette leaves.

The protein localises to the secreted. Its function is as follows. Thionins are small plant proteins which are toxic to animal cells. They seem to exert their toxic effect at the level of the cell membrane. Their precise function is not known. The polypeptide is Thionin-2.2 (THI2.2) (Arabidopsis thaliana (Mouse-ear cress)).